The following is a 210-amino-acid chain: uncharacterized protein (210 aa).

The region spanning 90 to 193 (KPDQIIVNEY…RISITFRNVI (104 aa)) is the Fe2OG dioxygenase domain.

This is an uncharacterized protein from Acanthamoeba polyphaga (Amoeba).